A 307-amino-acid chain; its full sequence is 4-hydroxy-3-methylbut-2-enyl diphosphate reductase (307 aa).

Cys13 serves as a coordination point for [4Fe-4S] cluster. (2E)-4-hydroxy-3-methylbut-2-enyl diphosphate contacts are provided by His42 and His75. The dimethylallyl diphosphate site is built by His42 and His75. His42 and His75 together coordinate isopentenyl diphosphate. Cys97 contacts [4Fe-4S] cluster. His125 contacts (2E)-4-hydroxy-3-methylbut-2-enyl diphosphate. His125 contacts dimethylallyl diphosphate. His125 provides a ligand contact to isopentenyl diphosphate. The active-site Proton donor is the Glu127. Position 165 (Thr165) interacts with (2E)-4-hydroxy-3-methylbut-2-enyl diphosphate. A [4Fe-4S] cluster-binding site is contributed by Cys195. (2E)-4-hydroxy-3-methylbut-2-enyl diphosphate-binding residues include Ser223, Ser224, Asn225, and Ser267. Residues Ser223, Ser224, Asn225, and Ser267 each contribute to the dimethylallyl diphosphate site. Positions 223, 224, 225, and 267 each coordinate isopentenyl diphosphate.

Belongs to the IspH family. [4Fe-4S] cluster is required as a cofactor.

It carries out the reaction isopentenyl diphosphate + 2 oxidized [2Fe-2S]-[ferredoxin] + H2O = (2E)-4-hydroxy-3-methylbut-2-enyl diphosphate + 2 reduced [2Fe-2S]-[ferredoxin] + 2 H(+). The enzyme catalyses dimethylallyl diphosphate + 2 oxidized [2Fe-2S]-[ferredoxin] + H2O = (2E)-4-hydroxy-3-methylbut-2-enyl diphosphate + 2 reduced [2Fe-2S]-[ferredoxin] + 2 H(+). It functions in the pathway isoprenoid biosynthesis; dimethylallyl diphosphate biosynthesis; dimethylallyl diphosphate from (2E)-4-hydroxy-3-methylbutenyl diphosphate: step 1/1. Its pathway is isoprenoid biosynthesis; isopentenyl diphosphate biosynthesis via DXP pathway; isopentenyl diphosphate from 1-deoxy-D-xylulose 5-phosphate: step 6/6. Functionally, catalyzes the conversion of 1-hydroxy-2-methyl-2-(E)-butenyl 4-diphosphate (HMBPP) into a mixture of isopentenyl diphosphate (IPP) and dimethylallyl diphosphate (DMAPP). Acts in the terminal step of the DOXP/MEP pathway for isoprenoid precursor biosynthesis. This is 4-hydroxy-3-methylbut-2-enyl diphosphate reductase from Chlamydia trachomatis serovar L2b (strain UCH-1/proctitis).